A 517-amino-acid chain; its full sequence is Maturase K (517 aa).

Belongs to the intron maturase 2 family. MatK subfamily.

Its subcellular location is the plastid. It localises to the chloroplast. In terms of biological role, usually encoded in the trnK tRNA gene intron. Probably assists in splicing its own and other chloroplast group II introns. The chain is Maturase K from Caryota mitis (Burmese fishtail palm).